The primary structure comprises 334 residues: Photosystem II assembly protein Ycf48 (334 aa).

The N-terminal stretch at 1-22 is a signal peptide; sequence MAKMLKLWRLVLLAAFSLLLMA.

Belongs to the Ycf48 family. Part of early PSII assembly complexes which includes D1 (psbA) and PsbI; not found in mature PSII. Binds to the lumenal side of PSII complexes. Interacts with YidC.

It localises to the cellular thylakoid lumen. Its function is as follows. A factor required for optimal assembly of photosystem II (PSII), acting in the early stages of PSII assembly. Also plays a role in replacement of photodamaged D1 (psbA). Assists YidC in synthesis of chlorophyll-binding proteins. This is Photosystem II assembly protein Ycf48 from Synechococcus sp. (strain JA-3-3Ab) (Cyanobacteria bacterium Yellowstone A-Prime).